We begin with the raw amino-acid sequence, 82 residues long: Mitotic-spindle organizing protein 1 (82 aa).

N-acetylalanine is present on Ala2.

This sequence belongs to the MOZART1 family. In terms of assembly, associates with the gamma-tubulin ring complex (gTuRC) consisting of TUBGCP2, TUBGCP3, TUBGCP4, TUBGCP5 and TUBGCP6 and gamma-tubulin TUBG1 or TUBG2; within the complex, interacts with TUBGCP3 and TUBGCP6 to form a luminal bridge with actin that stabilizes the initial structure during complex assembly. Interacts with TUBG1.

It localises to the cytoplasm. Its subcellular location is the cytoskeleton. It is found in the microtubule organizing center. The protein localises to the centrosome. The protein resides in the spindle. Required for the recruitment and the assembly of the gamma-tubulin ring complex (gTuRC) at the centrosome. The gTuRC regulates the minus-end nucleation of alpha-beta tubulin heterodimers that grow into microtubule protafilaments, a critical step in centrosome duplication and spindle formation. The sequence is that of Mitotic-spindle organizing protein 1 (MZT1) from Homo sapiens (Human).